The sequence spans 475 residues: 3-isopropylmalate dehydratase large subunit (475 aa).

Positions 348, 408, and 411 each coordinate [4Fe-4S] cluster.

Belongs to the aconitase/IPM isomerase family. LeuC type 1 subfamily. Heterodimer of LeuC and LeuD. [4Fe-4S] cluster serves as cofactor.

It catalyses the reaction (2R,3S)-3-isopropylmalate = (2S)-2-isopropylmalate. The protein operates within amino-acid biosynthesis; L-leucine biosynthesis; L-leucine from 3-methyl-2-oxobutanoate: step 2/4. Its function is as follows. Catalyzes the isomerization between 2-isopropylmalate and 3-isopropylmalate, via the formation of 2-isopropylmaleate. This Acidobacterium capsulatum (strain ATCC 51196 / DSM 11244 / BCRC 80197 / JCM 7670 / NBRC 15755 / NCIMB 13165 / 161) protein is 3-isopropylmalate dehydratase large subunit.